The chain runs to 474 residues: Dol-P-Glc:Glc(2)Man(9)GlcNAc(2)-PP-Dol alpha-1,2-glucosyltransferase (474 aa).

The Cytoplasmic portion of the chain corresponds to 1 to 6 (MAQLEG). A helical membrane pass occupies residues 7–27 (YYFSAALSCTFLVSCLLFSAF). Residues 28–64 (SRALREPYMDEIFHLPQAQRYCEGRFSLSQWDPMITT) lie on the Extracellular side of the membrane. A helical transmembrane segment spans residues 65-85 (LPGLYLVSVGVVKPASWILGW). Residues 86–97 (SEHVVCSIGMLR) lie on the Cytoplasmic side of the membrane. A helical transmembrane segment spans residues 98 to 118 (FVNLLFSVGNFYLLYLLFRKI). Residues 119-126 (QPRNKASS) are Extracellular-facing. A helical transmembrane segment spans residues 127–147 (SIQRILSTLTLAVFPTLYFFN). At 148–150 (FLY) the chain is on the cytoplasmic side. Residues 151–171 (YTEAGSVFFTLFAYLMCLYGN) form a helical membrane-spanning segment. At 172-175 (HRTS) the chain is on the extracellular side. Residues 176–196 (ALLGFCGFMFRQTNIIWAAFC) traverse the membrane as a helical segment. The Cytoplasmic segment spans residues 197–256 (AGHIIAQKCSEAWKTELQKKKEERLPPAKGPLSELRRVLQFLLMYSMSLKNLSMLFLLTW). The helical transmembrane segment at 257–277 (PYMLLLLAFFVFVVVNGGIVV) threads the bilayer. Residues 278-283 (GDRSSH) lie on the Extracellular side of the membrane. A helical membrane pass occupies residues 284 to 304 (EACLHFPQLFYFFSFTAFFSF). Over 305 to 317 (PHLLSPTKVKTFL) the chain is Cytoplasmic. A helical transmembrane segment spans residues 318–338 (SLVWKRRVQFSVITLVSVFLV). At 339 to 365 (WKFTYVHKYLLADNRHYTFYVWKRVFQ) the chain is on the extracellular side. The chain crosses the membrane as a helical span at residues 366–386 (RHEIVKYLLVPAYMFAGWAVA). Residues 387-392 (DSLKSK) are Cytoplasmic-facing. A helical transmembrane segment spans residues 393 to 413 (SIFWNLMFFVCLVASTVPQKL). The Extracellular portion of the chain corresponds to 414–436 (LEFRYFILPYIIYRLNMPLPPIS). A helical transmembrane segment spans residues 437 to 457 (RLVCELGCYAVVNFLTFYIFL). Residues 458-473 (NKTFQWSDSHDIQRFM) are Cytoplasmic-facing.

It belongs to the ALG10 glucosyltransferase family. As to quaternary structure, interacts with KCNH1; may regulate KCNH1, possibly by regulating its N-glycosylation. Interacts with KCNH2; may reduce KCNH2 sensitivity to classic proarrhythmic drug blockade, possibly by regulating its N-glycosylation. Highly expressed in brain, skeletal muscle, uterus, small intestine and liver. Moderately expressed in lung and kidney. Weakly expressed in heart and stomach.

Its subcellular location is the endoplasmic reticulum membrane. The enzyme catalyses an alpha-D-Glc-(1-&gt;3)-alpha-D-Glc-(1-&gt;3)-alpha-D-Man-(1-&gt;2)-alpha-D-Man-(1-&gt;2)-alpha-D-Man-(1-&gt;3)-[alpha-D-Man-(1-&gt;2)-alpha-D-Man-(1-&gt;3)-[alpha-D-Man-(1-&gt;2)-alpha-D-Man-(1-&gt;6)]-alpha-D-Man-(1-&gt;6)]-beta-D-Man-(1-&gt;4)-beta-D-GlcNAc-(1-&gt;4)-alpha-D-GlcNAc-diphospho-di-trans,poly-cis-dolichol + a di-trans,poly-cis-dolichyl beta-D-glucosyl phosphate = a alpha-D-Glc-(1-&gt;2)-alpha-D-Glc-(1-&gt;3)-alpha-D-Glc-(1-&gt;3)-alpha-D-Man-(1-&gt;2)-alpha-D-Man-(1-&gt;2)-alpha-D-Man-(1-&gt;3)-[alpha-D-Man-(1-&gt;2)-alpha-D-Man-(1-&gt;3)-[alpha-D-Man-(1-&gt;2)-alpha-D-Man-(1-&gt;6)]-alpha-D-Man-(1-&gt;6)]-beta-D-Man-(1-&gt;4)-beta-D-GlcNAc-(1-&gt;4)-alpha-D-GlcNAc-diphospho-di-trans,poly-cis-dolichol + a di-trans,poly-cis-dolichyl phosphate + H(+). Its pathway is protein modification; protein glycosylation. Its function is as follows. Dol-P-Glc:Glc(2)Man(9)GlcNAc(2)-PP-Dol alpha-1,2-glucosyltransferase that operates in the biosynthetic pathway of dolichol-linked oligosaccharides, the glycan precursors employed in protein asparagine (N)-glycosylation. The assembly of dolichol-linked oligosaccharides begins on the cytosolic side of the endoplasmic reticulum membrane and finishes in its lumen. The sequential addition of sugars to dolichol pyrophosphate produces dolichol-linked oligosaccharides containing fourteen sugars, including two GlcNAcs, nine mannoses and three glucoses. Once assembled, the oligosaccharide is transferred from the lipid to nascent proteins by oligosaccharyltransferases. In the lumen of the endoplasmic reticulum, adds the third and last glucose residue from dolichyl phosphate glucose (Dol-P-Glc) onto the lipid-linked oligosaccharide intermediate Glc(2)Man(9)GlcNAc(2)-PP-Dol to produce Glc(3)Man(9)GlcNAc(2)-PP-Dol. In Rattus norvegicus (Rat), this protein is Dol-P-Glc:Glc(2)Man(9)GlcNAc(2)-PP-Dol alpha-1,2-glucosyltransferase.